We begin with the raw amino-acid sequence, 134 residues long: Holo-[acyl-carrier-protein] synthase (134 aa).

Positions 8 and 57 each coordinate Mg(2+).

The protein belongs to the P-Pant transferase superfamily. AcpS family. Mg(2+) is required as a cofactor.

The protein resides in the cytoplasm. It catalyses the reaction apo-[ACP] + CoA = holo-[ACP] + adenosine 3',5'-bisphosphate + H(+). Transfers the 4'-phosphopantetheine moiety from coenzyme A to a Ser of acyl-carrier-protein. The polypeptide is Holo-[acyl-carrier-protein] synthase (Rhizobium etli (strain CIAT 652)).